Reading from the N-terminus, the 341-residue chain is Putative MAGE domain-containing protein MAGEA13P (341 aa).

Disordered regions lie at residues 1 to 21 and 78 to 101; these read MPHS…APKE and KATP…GASQ. Residues 87-97 are compositionally biased toward basic and acidic residues; that stretch reads ESSRSQEKKDP. The region spanning 105–304 is the MAGE domain; that stretch reads LEKKVDELVK…SSFPLLYEEA (200 aa).

The protein is Putative MAGE domain-containing protein MAGEA13P (MAGEA13P) of Homo sapiens (Human).